The sequence spans 88 residues: Small ribosomal subunit protein uS15c (88 aa).

Belongs to the universal ribosomal protein uS15 family. In terms of assembly, part of the 30S ribosomal subunit.

It is found in the plastid. The protein localises to the chloroplast. This chain is Small ribosomal subunit protein uS15c (rps15), found in Arabidopsis thaliana (Mouse-ear cress).